Consider the following 590-residue polypeptide: Acetolactate synthase large subunit (590 aa).

Position 61 (Glu-61) interacts with thiamine diphosphate. Residues Arg-163, 271–292 (HGTAYANFAVSECDLLIALGAR), and 314–333 (DIDPAEVGKNRIPQVAIVGD) each bind FAD. Residues 405-484 (QHQMWSAQFL…VKIIIINNRW (80 aa)) are thiamine pyrophosphate binding. Asp-455 and Asn-482 together coordinate Mg(2+).

It belongs to the TPP enzyme family. In terms of assembly, dimer of large and small chains. Mg(2+) serves as cofactor. Requires thiamine diphosphate as cofactor.

It localises to the plastid. Its subcellular location is the chloroplast. It carries out the reaction 2 pyruvate + H(+) = (2S)-2-acetolactate + CO2. It functions in the pathway amino-acid biosynthesis; L-isoleucine biosynthesis; L-isoleucine from 2-oxobutanoate: step 1/4. The protein operates within amino-acid biosynthesis; L-valine biosynthesis; L-valine from pyruvate: step 1/4. In Pyropia yezoensis (Susabi-nori), this protein is Acetolactate synthase large subunit (ilvB).